Reading from the N-terminus, the 390-residue chain is Type II methyltransferase M.SacI (390 aa).

Residues 5–371 (LPVISLFSGA…RALMEQLGYL (367 aa)) form the SAM-dependent MTase C5-type domain. Cysteine 96 is a catalytic residue.

Belongs to the class I-like SAM-binding methyltransferase superfamily. C5-methyltransferase family.

It catalyses the reaction a 2'-deoxycytidine in DNA + S-adenosyl-L-methionine = a 5-methyl-2'-deoxycytidine in DNA + S-adenosyl-L-homocysteine + H(+). In terms of biological role, a beta methylase recognizes the double-stranded sequence 5'-GAGCTC-3', methylates C-4 on both strands, and protects the DNA from cleavage by the SacI endonuclease. This is Type II methyltransferase M.SacI from Streptomyces achromogenes.